A 244-amino-acid polypeptide reads, in one-letter code: Small ribosomal subunit protein uS2 (244 aa).

This sequence belongs to the universal ribosomal protein uS2 family.

This chain is Small ribosomal subunit protein uS2, found in Buchnera aphidicola subsp. Acyrthosiphon pisum (strain 5A).